A 72-amino-acid polypeptide reads, in one-letter code: Translation initiation factor IF-1 2 (72 aa).

One can recognise an S1-like domain in the interval 1–72; that stretch reads MAKEDAIEVD…KRGRITYRMK (72 aa).

It belongs to the IF-1 family. Component of the 30S ribosomal translation pre-initiation complex which assembles on the 30S ribosome in the order IF-2 and IF-3, IF-1 and N-formylmethionyl-tRNA(fMet); mRNA recruitment can occur at any time during PIC assembly.

It is found in the cytoplasm. Functionally, one of the essential components for the initiation of protein synthesis. Stabilizes the binding of IF-2 and IF-3 on the 30S subunit to which N-formylmethionyl-tRNA(fMet) subsequently binds. Helps modulate mRNA selection, yielding the 30S pre-initiation complex (PIC). Upon addition of the 50S ribosomal subunit IF-1, IF-2 and IF-3 are released leaving the mature 70S translation initiation complex. The sequence is that of Translation initiation factor IF-1 2 from Nitratidesulfovibrio vulgaris (strain DP4) (Desulfovibrio vulgaris).